We begin with the raw amino-acid sequence, 136 residues long: MLGPTWEPLAPTSMLGLEGPCWVGPGPDGGFAVSEEFGDVQLFGSAHQPLGSLGTLTGHNFGHPAGVCSDAEGSIIVADEQRHQVTLFPRVGPPICLQLEGLKRPLGMACAPQGQLVVADAGDNCIKLYQYLGEMA.

NHL repeat units follow at residues 48-91 (QPLG…FPRV) and 93-132 (PPIC…YQYL).

The chain is NHL-repeat-containing protein 4 (Nhlrc4) from Mus musculus (Mouse).